The chain runs to 594 residues: MSASSQYDEFQAMLEQQKGIYLQQNSQLAKYNSSLMMKITDMETKVSELVQENVSLRSRLSMGELRYREKLNTVFQTLEDGIVEKFLQMNQLLTTVRESQGLESGIHDNPLKPILRGSNGISPRSAKKVEFTGANTTTKPVGFEDPIAEDNHENSGNSLELNDDEVRPLRKRRRKSSRRESLFIPADFEFNDEDPELELNQLPITEDEPPPSTAATSVPEEESQENKHTKEEREDEGKENVSTIPLVPVLPSVTNTGTECSNTNKNNTTEMETALAEDDSYNFTTSVIEYSIPEETSTHEHSHILLETSKSKIDVYNDREETNNNEADDSMNIVQCTIPSQSKIKHSMKHPRTKLKGGQDDIMPHTDYDKDDEKRERRTRGKAVNYKLPSLRAKMRRPTEKLVDATTVTDIHDLQVKRRNNQQQGIPSDDDDQEELLVPAGVPDTNVVIATVEEENRKEPPALPLHEIHLAQNVKPKIALKELSANAINRKVKTSTAVKAISHTKSRVLKDVKFNTLPTKQQAIENNSSDPNVSDENENSNVKPTRTKQATSDLAAFEIIDGISLKHVSRTHRVRAKEDMNKKRKRIHNDEISI.

Positions 38-61 (KITDMETKVSELVQENVSLRSRLS) form a coiled coil. 4 disordered regions span residues 104–178 (SGIH…KSSR), 201–266 (QLPI…TNKN), 342–380 (SKIKHSMKHPRTKLKGGQDDIMPHTDYDKDDEKRERRTR), and 519–549 (TKQQAIENNSSDPNVSDENENSNVKPTRTKQ). A coiled-coil region spans residues 220–240 (EEESQENKHTKEEREDEGKEN). Positions 224-239 (QENKHTKEEREDEGKE) are enriched in basic and acidic residues. The span at 252–261 (SVTNTGTECS) shows a compositional bias: polar residues. Residues 343–355 (KIKHSMKHPRTKL) show a composition bias toward basic residues. Positions 357-376 (GGQDDIMPHTDYDKDDEKRE) are enriched in basic and acidic residues. Polar residues-rich tracts occupy residues 519 to 532 (TKQQAIENNSSDPN) and 539 to 549 (NSNVKPTRTKQ).

Belongs to the shugoshin family.

Its subcellular location is the nucleus. It is found in the chromosome. The protein localises to the centromere. Plays a central role in chromosome cohesion during cell division by preventing premature dissociation of cohesin complex from centromeres after prophase, when most of cohesin complex dissociates from chromosomes arms. This is Shugoshin (SGO1) from Kluyveromyces lactis (strain ATCC 8585 / CBS 2359 / DSM 70799 / NBRC 1267 / NRRL Y-1140 / WM37) (Yeast).